A 354-amino-acid polypeptide reads, in one-letter code: Membrane progestin receptor beta (354 aa).

The Cytoplasmic portion of the chain corresponds to 1 to 75; it reads MTTAILQRLS…FFSLFQKHNE (75 aa). The chain crosses the membrane as a helical span at residues 76 to 96; that stretch reads VVNVWTHLLAALAVLLRFWAF. The Extracellular portion of the chain corresponds to 97–111; sequence VETEGLPWTSAHTLP. A helical transmembrane segment spans residues 112–132; it reads LLLYVLSSITYLTFSLLAHLL. Residues 133-174 are Cytoplasmic-facing; that stretch reads QSKSELSHYTFYFVDYVGVSVYQYGSALVHFFYASDQAWYER. The chain crosses the membrane as a helical span at residues 175–195; the sequence is FWLFFLPAAAFCGWLSCTGCC. The Extracellular segment spans residues 196–213; it reads YAKYRYRRPYPVMRKVCQ. A helical transmembrane segment spans residues 214-234; that stretch reads VVPAGLAFILDISPVAHRVAL. The Cytoplasmic portion of the chain corresponds to 235–243; the sequence is CHLSGCQEQ. Residues 244–264 traverse the membrane as a helical segment; the sequence is AAWYHTLQIVFFLVSAYFFSC. Residues 265 to 283 lie on the Extracellular side of the membrane; that stretch reads PVPEKYFPGSCDIVGHGHQ. The chain crosses the membrane as a helical span at residues 284–304; it reads IFHAFLSICTLSQLEAILLDY. The Cytoplasmic segment spans residues 305–319; sequence KGRQEIFLHRHSPLS. The helical transmembrane segment at 320–340 threads the bilayer; sequence IYAACLSFFFLVACSGATAAL. Residues 341–354 lie on the Extracellular side of the membrane; the sequence is LREKIKARLSKKDS.

Belongs to the ADIPOR family.

It is found in the cell membrane. Steroid membrane receptor. Binds progesterone. May be involved in oocyte maturation. The chain is Membrane progestin receptor beta (PAQR8) from Sus scrofa (Pig).